We begin with the raw amino-acid sequence, 224 residues long: ATP-dependent dethiobiotin synthetase BioD (224 aa).

Residue 12 to 17 coordinates ATP; the sequence is EVGKTV. Threonine 16 contributes to the Mg(2+) binding site. The active site involves lysine 34. Substrate is bound at residue threonine 38. ATP contacts are provided by residues aspartate 47, 106 to 109, 166 to 167, and 196 to 198; these read EGAG, GS, and PEG. Residues aspartate 47 and glutamate 106 each contribute to the Mg(2+) site.

Belongs to the dethiobiotin synthetase family. Homodimer. The cofactor is Mg(2+).

The protein resides in the cytoplasm. It carries out the reaction (7R,8S)-7,8-diammoniononanoate + CO2 + ATP = (4R,5S)-dethiobiotin + ADP + phosphate + 3 H(+). Its pathway is cofactor biosynthesis; biotin biosynthesis; biotin from 7,8-diaminononanoate: step 1/2. Its function is as follows. Catalyzes a mechanistically unusual reaction, the ATP-dependent insertion of CO2 between the N7 and N8 nitrogen atoms of 7,8-diaminopelargonic acid (DAPA, also called 7,8-diammoniononanoate) to form a ureido ring. This chain is ATP-dependent dethiobiotin synthetase BioD, found in Saccharopolyspora erythraea (strain ATCC 11635 / DSM 40517 / JCM 4748 / NBRC 13426 / NCIMB 8594 / NRRL 2338).